The primary structure comprises 1345 residues: Protein dispatched homolog 2 (1345 aa).

The disordered stretch occupies residues 1–28 (MAPEASPERSCSLHTCPLEDPTGAPVPP). The chain crosses the membrane as a helical span at residues 125-145 (VAVIVGCLAFIFLCTLAGLLG). Asn-304 and Asn-420 each carry an N-linked (GlcNAc...) asparagine glycan. One can recognise an SSD domain in the interval 429–598 (LGLKPRLLKY…LLWLPATVVL (170 aa)). 6 consecutive transmembrane segments (helical) span residues 440–460 (LAEDTMYPLIALVVIFFGMSL), 465–485 (LFITFMSLLGVLGSLMVAYFL), 497–517 (FVNLAALLLLSGVCVNYTLIF), 544–564 (FGYLLLVSGLTTSAAFYGSYL), 572–592 (CFALFMGTAVLVHMGLTLLWL), and 659–679 (YIWICWFAALAAGGAYIGGVS). Asn-776 carries an N-linked (GlcNAc...) asparagine glycan. The next 5 helical transmembrane spans lie at 919–939 (PAVVLGLALALAFATLLLSTW), 945–965 (LFSVAAVAGTVLLTVGLLVLL), 974–994 (ALFLSASVGLSVDLTINYCIS), 1019–1039 (AMTTGVLFASGVIMLPSTILL), and 1043–1063 (LGIIVMMVKFLGCGFASFFFQ). 2 disordered regions span residues 1251-1271 (VRVPDSVGTSPEVMNGTGHPI) and 1295-1345 (PNMP…GYSS). A compositionally biased stretch (polar residues) spans 1297–1306 (MPNSHHSSLS). Omega-N-methylarginine is present on Arg-1310.

The protein belongs to the dispatched family.

The protein localises to the membrane. This is Protein dispatched homolog 2 (Disp2) from Mus musculus (Mouse).